We begin with the raw amino-acid sequence, 372 residues long: Cyclin-A3-2 (372 aa).

The interval 53 to 73 (NQKKETQKPKRNLKPPPAKQI) is disordered.

This sequence belongs to the cyclin family. Cyclin AB subfamily.

This Arabidopsis thaliana (Mouse-ear cress) protein is Cyclin-A3-2 (CYCA3-2).